A 77-amino-acid polypeptide reads, in one-letter code: Conotoxin King-Kong 1 (77 aa).

An N-terminal signal peptide occupies residues 1–22 (MKLTCMMIVAVLFLTAWTFATA). Positions 23 to 49 (DDSSNGLENLFSKAHHEMKNPEASKLN) are excised as a propeptide. Cystine bridges form between Cys52–Cys67, Cys59–Cys71, and Cys66–Cys76. Met61 bears the Methionine sulfoxide; partial mark.

This sequence belongs to the conotoxin O1 superfamily. As to expression, expressed by the venom duct.

It is found in the secreted. The sequence is that of Conotoxin King-Kong 1 from Conus textile (Cloth-of-gold cone).